The following is a 482-amino-acid chain: 6-phosphogluconate dehydrogenase, decarboxylating (482 aa).

NADP(+) is bound by residues Gly-17–Gly-22, Asn-40–Ser-42, Val-82–Ala-84, and Asn-110. Substrate-binding positions include Asn-110 and Ser-136–Gly-138. Residue Lys-193 is the Proton acceptor of the active site. His-196 to Asn-197 is a substrate binding site. Catalysis depends on Glu-200, which acts as the Proton donor. Substrate is bound by residues Tyr-201, Lys-272, Arg-299, Arg-457, and His-463.

This sequence belongs to the 6-phosphogluconate dehydrogenase family. In terms of assembly, homodimer.

It carries out the reaction 6-phospho-D-gluconate + NADP(+) = D-ribulose 5-phosphate + CO2 + NADPH. Its pathway is carbohydrate degradation; pentose phosphate pathway; D-ribulose 5-phosphate from D-glucose 6-phosphate (oxidative stage): step 3/3. Functionally, catalyzes the oxidative decarboxylation of 6-phosphogluconate to ribulose 5-phosphate and CO(2), with concomitant reduction of NADP to NADPH. The chain is 6-phosphogluconate dehydrogenase, decarboxylating (gnd) from Synechocystis sp. (strain ATCC 27184 / PCC 6803 / Kazusa).